A 440-amino-acid polypeptide reads, in one-letter code: GTPase Der (440 aa).

EngA-type G domains follow at residues 3 to 167 (PIIA…PYDR) and 176 to 351 (TRIA…EQYC). GTP contacts are provided by residues 9–16 (GRPNVGKS), 56–60 (DTGGF), 119–122 (NKVD), 182–189 (GRPNVGKS), 229–233 (DTAGI), and 294–297 (NKWD). The KH-like domain maps to 352–436 (KRVTTGELNR…PLKLIFRGRD (85 aa)).

Belongs to the TRAFAC class TrmE-Era-EngA-EngB-Septin-like GTPase superfamily. EngA (Der) GTPase family. As to quaternary structure, associates with the 50S ribosomal subunit.

Its function is as follows. GTPase that plays an essential role in the late steps of ribosome biogenesis. The protein is GTPase Der of Geobacter sp. (strain M21).